The chain runs to 248 residues: 14-3-3 protein zeta (248 aa).

The protein belongs to the 14-3-3 family. In terms of assembly, homodimer.

The protein resides in the cytoplasm. Its function is as follows. Adapter protein implicated in the regulation of a large spectrum of both general and specialized signaling pathways. Binds to a large number of partners, usually by recognition of a phosphoserine or phosphothreonine motif. Binding generally results in the modulation of the activity of the binding partner. In Aedes aegypti (Yellowfever mosquito), this protein is 14-3-3 protein zeta (14-3-3zeta).